Consider the following 328-residue polypeptide: Sin3 histone deacetylase corepressor complex component SDS3 (328 aa).

Positions 1 to 16 are enriched in low complexity; the sequence is MSAAGLLAPAPAQAGA. Residues 1 to 65 are disordered; that stretch reads MSAAGLLAPA…DLAKHDEEDY (65 aa). The residue at position 2 (Ser2) is an N-acetylserine. Residues 2 to 170 form a mediates interaction with USP17L2 region; it reads SAAGLLAPAP…IENEKLTMEL (169 aa). Composition is skewed to acidic residues over residues 23–37 and 45–54; these read YPEE…EEDE and SDEDTEDASE. Ser32 and Ser45 each carry phosphoserine. At Thr49 the chain carries Phosphothreonine. Residue Ser53 is modified to Phosphoserine. Residues 56-65 are compositionally biased toward basic and acidic residues; that stretch reads DLAKHDEEDY. A coiled-coil region spans residues 66–171; that stretch reads VEMKEQMYQD…ENEKLTMELT (106 aa). Glycyl lysine isopeptide (Lys-Gly) (interchain with G-Cter in SUMO2) cross-links involve residues Lys69, Lys178, and Lys201. The sin3 interaction domain (SID) stretch occupies residues 188–226; sequence RPNDPVPIPDKRRKPAPAQLNYLLTDEQIMEDLRTLNKL. The segment at 226–252 is disordered; it reads LKSPKRPASPSSPEHLPATPAESPAQR. Phosphoserine occurs at positions 228, 234, and 237. Position 244 is a phosphothreonine (Thr244).

This sequence belongs to the SDS3 family. In terms of assembly, interacts with HCFC1. Homodimer. Component of the SIN3 histone deacetylase (HDAC) corepressor complex. Interacts with SIN3A. Interaction with SIN3B enhances the interaction between SIN3B and HDAC1 to form a complex. Component of a mSin3A corepressor complex that contains SIN3A, SAP130, SUDS3/SAP45, ARID4B/SAP180, HDAC1 and HDAC2. Interacts with USP17L2; the interaction is direct. Interacts with FOXK2. Post-translationally, polyubiquitinated. 'Lys-63'-polyubiquitinated SUDS3 positively regulates histone deacetylation. Regulated through deubiquitination by USP17L2/USP17 that cleaves 'Lys-63'-linked ubiquitin chains.

The protein resides in the nucleus. Functionally, regulatory protein which represses transcription and augments histone deacetylase activity of HDAC1. May have a potential role in tumor suppressor pathways through regulation of apoptosis. May function in the assembly and/or enzymatic activity of the mSin3A corepressor complex or in mediating interactions between the complex and other regulatory complexes. The protein is Sin3 histone deacetylase corepressor complex component SDS3 (SUDS3) of Pongo abelii (Sumatran orangutan).